Consider the following 750-residue polypeptide: Photosystem I P700 chlorophyll a apoprotein A1 (750 aa).

Helical transmembrane passes span 70–93 (VFSA…FHGA), 156–179 (LYCT…FHYH), 195–219 (LNHH…HVSL), 291–309 (IVHH…GHMY), 346–369 (WHAQ…HHMY), 385–411 (LSLF…IFMV), 433–455 (AIIS…LYIH), and 531–549 (FLVH…LILL). Residues Cys-573 and Cys-582 each contribute to the [4Fe-4S] cluster site. The next 2 membrane-spanning stretches (helical) occupy residues 589-610 (HVFL…HFSW) and 664-686 (LSAY…MFLF). His-675 lines the chlorophyll a' pocket. Residues Met-683 and Tyr-691 each coordinate chlorophyll a. Trp-692 contacts phylloquinone. The helical transmembrane segment at 724–744 (AVGVTHYLLGGIATTWAFFLA) threads the bilayer.

It belongs to the PsaA/PsaB family. As to quaternary structure, the PsaA/B heterodimer binds the P700 chlorophyll special pair and subsequent electron acceptors. PSI consists of a core antenna complex that captures photons, and an electron transfer chain that converts photonic excitation into a charge separation. The eukaryotic PSI reaction center is composed of at least 11 subunits. P700 is a chlorophyll a/chlorophyll a' dimer, A0 is one or more chlorophyll a, A1 is one or both phylloquinones and FX is a shared 4Fe-4S iron-sulfur center. serves as cofactor.

The protein resides in the plastid. Its subcellular location is the chloroplast thylakoid membrane. The catalysed reaction is reduced [plastocyanin] + hnu + oxidized [2Fe-2S]-[ferredoxin] = oxidized [plastocyanin] + reduced [2Fe-2S]-[ferredoxin]. Functionally, psaA and PsaB bind P700, the primary electron donor of photosystem I (PSI), as well as the electron acceptors A0, A1 and FX. PSI is a plastocyanin-ferredoxin oxidoreductase, converting photonic excitation into a charge separation, which transfers an electron from the donor P700 chlorophyll pair to the spectroscopically characterized acceptors A0, A1, FX, FA and FB in turn. Oxidized P700 is reduced on the lumenal side of the thylakoid membrane by plastocyanin. This is Photosystem I P700 chlorophyll a apoprotein A1 from Piper cenocladum (Ant piper).